We begin with the raw amino-acid sequence, 247 residues long: 4-nitrobenzoate reductase (247 aa).

Residue 29 to 33 coordinates FMN; that stretch reads RRSVR. Residues S59, R112, Y120, and L126 each coordinate NADP(+). R232 is an FMN binding site.

The protein belongs to the nitroreductase family. FMN is required as a cofactor.

It carries out the reaction 4-nitrobenzoate + 2 NADPH + 2 H(+) = 4-hydroxylaminobenzoate + 2 NADP(+) + H2O. Functionally, nitroreductase involved in the degradation of nitroaromatic compounds. Catalyzes the conversion of 4-nitrobenzoate to 4-hydroxylaminobenzoate. The chain is 4-nitrobenzoate reductase from Nocardioides sp. (strain LMS-CY).